Here is a 166-residue protein sequence, read N- to C-terminus: Lipoprotein signal peptidase (166 aa).

3 helical membrane passes run 12-32, 70-90, and 102-122; these read WLWV…LILQ, WFFS…MYRS, and ALII…GFVV. Residues aspartate 123 and aspartate 141 contribute to the active site. Residues 137–157 traverse the membrane as a helical segment; the sequence is FNLADSAICIGAALIVLEGFL.

The protein belongs to the peptidase A8 family.

It localises to the cell inner membrane. It carries out the reaction Release of signal peptides from bacterial membrane prolipoproteins. Hydrolyzes -Xaa-Yaa-Zaa-|-(S,diacylglyceryl)Cys-, in which Xaa is hydrophobic (preferably Leu), and Yaa (Ala or Ser) and Zaa (Gly or Ala) have small, neutral side chains.. Its pathway is protein modification; lipoprotein biosynthesis (signal peptide cleavage). Its function is as follows. This protein specifically catalyzes the removal of signal peptides from prolipoproteins. The chain is Lipoprotein signal peptidase from Klebsiella pneumoniae subsp. pneumoniae (strain ATCC 700721 / MGH 78578).